The sequence spans 651 residues: Acetyl-coenzyme A synthetase (651 aa).

Residues 189-192, Thr-311, and Asn-335 contribute to the CoA site; that span reads RGGK. Residues 387-389, 411-416, Asp-500, and Arg-515 contribute to the ATP site; these read GEP and DTWWQT. Ser-523 is a CoA binding site. Residue Arg-526 participates in ATP binding. Residues Val-537, His-539, and Val-542 each coordinate Mg(2+). Arg-586 is a CoA binding site. The residue at position 611 (Lys-611) is an N6-acetyllysine.

It belongs to the ATP-dependent AMP-binding enzyme family. Mg(2+) serves as cofactor. Post-translationally, acetylated. Deacetylation by the SIR2-homolog deacetylase activates the enzyme.

It carries out the reaction acetate + ATP + CoA = acetyl-CoA + AMP + diphosphate. In terms of biological role, catalyzes the conversion of acetate into acetyl-CoA (AcCoA), an essential intermediate at the junction of anabolic and catabolic pathways. AcsA undergoes a two-step reaction. In the first half reaction, AcsA combines acetate with ATP to form acetyl-adenylate (AcAMP) intermediate. In the second half reaction, it can then transfer the acetyl group from AcAMP to the sulfhydryl group of CoA, forming the product AcCoA. The protein is Acetyl-coenzyme A synthetase of Brucella anthropi (strain ATCC 49188 / DSM 6882 / CCUG 24695 / JCM 21032 / LMG 3331 / NBRC 15819 / NCTC 12168 / Alc 37) (Ochrobactrum anthropi).